The following is a 90-amino-acid chain: Small ribosomal subunit protein uS15c (90 aa).

The protein belongs to the universal ribosomal protein uS15 family. In terms of assembly, part of the 30S ribosomal subunit.

The protein localises to the plastid. This Cuscuta reflexa (Southern Asian dodder) protein is Small ribosomal subunit protein uS15c (rps15).